Consider the following 514-residue polypeptide: Putative thymidine phosphorylase (514 aa).

Belongs to the thymidine/pyrimidine-nucleoside phosphorylase family. Type 2 subfamily.

It carries out the reaction thymidine + phosphate = 2-deoxy-alpha-D-ribose 1-phosphate + thymine. This is Putative thymidine phosphorylase from Sphingopyxis alaskensis (strain DSM 13593 / LMG 18877 / RB2256) (Sphingomonas alaskensis).